The chain runs to 302 residues: 4-hydroxy-tetrahydrodipicolinate synthase (302 aa).

Thr57 contacts pyruvate. The active-site Proton donor/acceptor is the Tyr145. The active-site Schiff-base intermediate with substrate is the Lys173. A pyruvate-binding site is contributed by Ile213.

The protein belongs to the DapA family. In terms of assembly, homotetramer; dimer of dimers.

It is found in the cytoplasm. The enzyme catalyses L-aspartate 4-semialdehyde + pyruvate = (2S,4S)-4-hydroxy-2,3,4,5-tetrahydrodipicolinate + H2O + H(+). It functions in the pathway amino-acid biosynthesis; L-lysine biosynthesis via DAP pathway; (S)-tetrahydrodipicolinate from L-aspartate: step 3/4. Functionally, catalyzes the condensation of (S)-aspartate-beta-semialdehyde [(S)-ASA] and pyruvate to 4-hydroxy-tetrahydrodipicolinate (HTPA). The sequence is that of 4-hydroxy-tetrahydrodipicolinate synthase from Mycolicibacterium gilvum (strain PYR-GCK) (Mycobacterium gilvum (strain PYR-GCK)).